A 666-amino-acid polypeptide reads, in one-letter code: DNA mismatch repair protein MutL (666 aa).

Belongs to the DNA mismatch repair MutL/HexB family.

In terms of biological role, this protein is involved in the repair of mismatches in DNA. It is required for dam-dependent methyl-directed DNA mismatch repair. May act as a 'molecular matchmaker', a protein that promotes the formation of a stable complex between two or more DNA-binding proteins in an ATP-dependent manner without itself being part of a final effector complex. The protein is DNA mismatch repair protein MutL of Clostridium botulinum (strain Kyoto / Type A2).